The primary structure comprises 428 residues: MPKEKPHVNIVFIGHVDHGKSTTIGRLLYDTGNIPETIIKKFEEMGEKGKSFKFAWVMDRLKEERERGITIDVAHTKFETPHRYITIIDAPGHRDFVKNMITGASQADAAVLVVAATDGVMPQTKEHAFLARTLGIKHIIVTINKMDMVNYDQKVFEKVKAQVEKLLRTLGYKDFPVIPTSAWNGDNIVKKSDKMPWYNGPTLIEALDQIPEPEKPVDKPLRIPIQDVYSIKGVGTVPVGRVETGKLKVGDVVIFEPASTIFHKPIQGEVKSIEMHHEPLQEALPGDNIGFNVRGVSKNDIKRGDVAGHPDKPPTVVRTKDTFKAQIIVLNHPTAITVGYSPVLHAHTAQVPVRFEQLLAKIDPRTGNITEENPQFIKTGDSAIVVLRPMKPVVLEPVKELPQLGRFAIRDMGMTIAAGMVISIQKGE.

Residues 5 to 217 (KPHVNIVFIG…DQIPEPEKPV (213 aa)) form the tr-type G domain. A G1 region spans residues 14–21 (GHVDHGKS). 14–21 (GHVDHGKS) lines the GTP pocket. Ser-21 serves as a coordination point for Mg(2+). Residues 68 to 72 (GITID) are G2. The G3 stretch occupies residues 89 to 92 (DAPG). Residues 89–93 (DAPGH) and 144–147 (NKMD) each bind GTP. The G4 stretch occupies residues 144-147 (NKMD). Residues 181–183 (SAW) form a G5 region.

This sequence belongs to the TRAFAC class translation factor GTPase superfamily. Classic translation factor GTPase family. EF-Tu/EF-1A subfamily.

The protein resides in the cytoplasm. The enzyme catalyses GTP + H2O = GDP + phosphate + H(+). Functionally, GTP hydrolase that promotes the GTP-dependent binding of aminoacyl-tRNA to the A-site of ribosomes during protein biosynthesis. In Pyrococcus abyssi (strain GE5 / Orsay), this protein is Elongation factor 1-alpha.